A 314-amino-acid polypeptide reads, in one-letter code: Methionyl-tRNA formyltransferase (314 aa).

111–114 is a (6S)-5,6,7,8-tetrahydrofolate binding site; sequence SLLP.

The protein belongs to the Fmt family.

The enzyme catalyses L-methionyl-tRNA(fMet) + (6R)-10-formyltetrahydrofolate = N-formyl-L-methionyl-tRNA(fMet) + (6S)-5,6,7,8-tetrahydrofolate + H(+). Attaches a formyl group to the free amino group of methionyl-tRNA(fMet). The formyl group appears to play a dual role in the initiator identity of N-formylmethionyl-tRNA by promoting its recognition by IF2 and preventing the misappropriation of this tRNA by the elongation apparatus. The protein is Methionyl-tRNA formyltransferase of Chlorobium chlorochromatii (strain CaD3).